The sequence spans 407 residues: Argininosuccinate synthase (407 aa).

Residues 16 to 24 and Ala44 contribute to the ATP site; that span reads AYSGGLDTS. 2 residues coordinate L-citrulline: Tyr96 and Ser101. Gly126 lines the ATP pocket. L-aspartate contacts are provided by Thr128, Asn132, and Asp133. Residue Asn132 participates in L-citrulline binding. The L-citrulline site is built by Arg136, Ser185, Ser194, Glu270, and Tyr282.

Belongs to the argininosuccinate synthase family. Type 1 subfamily. In terms of assembly, homotetramer.

The protein resides in the cytoplasm. The catalysed reaction is L-citrulline + L-aspartate + ATP = 2-(N(omega)-L-arginino)succinate + AMP + diphosphate + H(+). It participates in amino-acid biosynthesis; L-arginine biosynthesis; L-arginine from L-ornithine and carbamoyl phosphate: step 2/3. This is Argininosuccinate synthase from Shewanella amazonensis (strain ATCC BAA-1098 / SB2B).